The sequence spans 279 residues: NH(3)-dependent NAD(+) synthetase (279 aa).

An ATP-binding site is contributed by 40-47; it reads GLSGGIDS. Position 46 (Asp-46) interacts with Mg(2+). Arg-122 is a binding site for deamido-NAD(+). Residue Thr-142 participates in ATP binding. Glu-147 contributes to the Mg(2+) binding site. Deamido-NAD(+) is bound by residues Lys-155 and Asp-162. 2 residues coordinate ATP: Lys-171 and Ser-193. 253–254 is a deamido-NAD(+) binding site; the sequence is HK.

Belongs to the NAD synthetase family. Homodimer.

The enzyme catalyses deamido-NAD(+) + NH4(+) + ATP = AMP + diphosphate + NAD(+) + H(+). Its pathway is cofactor biosynthesis; NAD(+) biosynthesis; NAD(+) from deamido-NAD(+) (ammonia route): step 1/1. Functionally, catalyzes the ATP-dependent amidation of deamido-NAD to form NAD. Uses ammonia as a nitrogen source. The protein is NH(3)-dependent NAD(+) synthetase of Sulfurisphaera tokodaii (strain DSM 16993 / JCM 10545 / NBRC 100140 / 7) (Sulfolobus tokodaii).